Consider the following 49-residue polypeptide: MAVKDYYKVQGDSVTRLKQFCPRCGPGVFLADHKNRLACGKCGYTEFKK.

C21, C24, C39, and C42 together coordinate Zn(2+). The C4-type zinc-finger motif lies at 21 to 42; it reads CPRCGPGVFLADHKNRLACGKC.

Belongs to the eukaryotic ribosomal protein eS31 family. As to quaternary structure, part of the 30S ribosomal subunit. It depends on Zn(2+) as a cofactor.

The polypeptide is Small ribosomal subunit protein eS31 (Methanosarcina mazei (strain ATCC BAA-159 / DSM 3647 / Goe1 / Go1 / JCM 11833 / OCM 88) (Methanosarcina frisia)).